The sequence spans 253 residues: Protein PET20, mitochondrial (253 aa).

The transit peptide at 1–36 directs the protein to the mitochondrion; the sequence is MLKLARPFIPPLSRNNAISSGIVLTSRRFQSSFTFL. The interval 44–93 is disordered; it reads KNQMKSKRKKGSKKAAYHRQPPEHEHTAPLIKQNKTITKKEHSDVRGSHL. Over residues 47–60 the composition is skewed to basic residues; it reads MKSKRKKGSKKAAY. The span at 81–90 shows a compositional bias: basic and acidic residues; the sequence is TKKEHSDVRG.

It is found in the mitochondrion. Functionally, required for respiratory growth, stability of the mitochondrial genome and for proper assembly or maintenance of mitochondrial proteins. The sequence is that of Protein PET20, mitochondrial (PET20) from Saccharomyces cerevisiae (strain ATCC 204508 / S288c) (Baker's yeast).